The primary structure comprises 247 residues: uncharacterized protein (247 aa).

This is an uncharacterized protein from Acanthamoeba polyphaga (Amoeba).